Reading from the N-terminus, the 347-residue chain is Two pore potassium channel a (347 aa).

The segment covering 1–11 (MDDNSIQQSLL) has biased composition (polar residues). The disordered stretch occupies residues 1-49 (MDDNSIQQSLLADNPNVLQRKPSEGVNRFRRCRSTPSTDPLQGPPEKGS). The Cytoplasmic portion of the chain corresponds to 1–65 (MDDNSIQQSL…LFKEMRPSFR (65 aa)). A helical transmembrane segment spans residues 66 to 86 (LVGLLLFIYLLVGVLAFYAVM). Residues 99 to 118 (DALYFCVVTMTTVGYGDLVP) constitute an intramembrane region (pore-forming). Residues 125–145 (LLACAFVFMGMAVVALFVSKV) form a helical membrane-spanning segment. Over 146-183 (ADYLVEKQEVLFFKALHTNLKGGETKMLRAIETNRIKY) the chain is Cytoplasmic. A helical transmembrane segment spans residues 184–204 (KFYTNALLLVLSIISGTVFLW). An intramembrane region (pore-forming) is located at residues 213–232 (DSFYCVCATITTLGYGDKSF). A helical transmembrane segment spans residues 239–259 (VFAVFWIITSTIIMAQFFMYL). The Cytoplasmic segment spans residues 260-347 (AEIYTERRQK…YDLTLAQSAQ (88 aa)). EF-hand domains lie at 276–311 (LTRK…ELGK) and 315–347 (EEIS…QSAQ). The Ca(2+) site is built by Asp-289, Asp-291, Asp-293, Gln-295, Glu-300, Asp-328, Asp-330, Ser-332, Thr-334, and Asp-339.

The protein belongs to the two pore domain potassium channel (TC 1.A.1.7) family. As to quaternary structure, homodimer.

It is found in the vacuole membrane. Highly selective inward-rectifying potassium channel that is specifically located in the tonoplast of large vacuoles. Functions independently of the voltage difference across the membrane. The sequence is that of Two pore potassium channel a (TPKA) from Oryza sativa subsp. japonica (Rice).